We begin with the raw amino-acid sequence, 471 residues long: WASH complex subunit 1 (471 aa).

A required for WASH complex assembly region spans residues 1-54; that stretch reads MTPTGTQHSLAGQTYAVPLIQPDLRREEAIQQVADALQYLQKVSGDIFSRISQR. The segment at 1 to 167 is WHD1; it reads MTPTGTQHSL…EGLGGLPSNI (167 aa). The interval 297–471 is disordered; it reads EDGVLTARPP…GEEDEDDWES (175 aa). Over residues 304–336 the composition is skewed to pro residues; that stretch reads RPPPPPPPPPPPAPAVLMSVPPPPPPPQAPPGQ. The VCA stretch occupies residues 353–471; it reads QGAPKEVVDP…GEEDEDDWES (119 aa). Residues 365-387 enclose the WH2 domain; the sequence is GRATLLESIRQAGGIGKAKLRSV. A compositionally biased stretch (basic and acidic residues) spans 386-402; it reads SVKERKLEKKKQKEQEQ. The segment covering 428 to 442 has biased composition (gly residues); sequence SGKGPGSGASEGPGG. Over residues 462 to 471 the composition is skewed to acidic residues; it reads GEEDEDDWES.

It belongs to the WASH1 family. Component of the WASH core complex also described as WASH regulatory complex SHRC composed of WASHC1, WASHC2, WASHC3, WASHC4 and WASHC5. The WASH core complex associates with the F-actin-capping protein dimer (formed by CAPZA1, CAPZA2 or CAPZA3 and CAPZB); the assembly has been initially described as WASH complex. Interacts (via WHD1 region) with WASHC2; the interaction is direct. Interacts with alpha-tubulin. Interacts with BECN1; WASHC1 and AMBRA1 can competitively interact with BECN1. Interacts with BLOC1S2; may associate with the BLOC-1 complex. Interacts with tubulin gamma chain (TUBG1 or TUBG2). Interacts with TBC1D23.

It localises to the early endosome membrane. It is found in the recycling endosome membrane. Its subcellular location is the late endosome. The protein resides in the cytoplasmic vesicle. The protein localises to the autophagosome. It localises to the cytoplasm. It is found in the cytoskeleton. Its subcellular location is the microtubule organizing center. The protein resides in the centrosome. The protein localises to the centriole. In terms of biological role, acts as a component of the WASH core complex that functions as a nucleation-promoting factor (NPF) at the surface of endosomes, where it recruits and activates the Arp2/3 complex to induce actin polymerization, playing a key role in the fission of tubules that serve as transport intermediates during endosome sorting. Involved in endocytic trafficking of EGF. Involved in transferrin receptor recycling. Regulates the trafficking of endosomal alpha5beta1 integrin to the plasma membrane and involved in invasive cell migration. In T-cells involved in endosome-to-membrane recycling of receptors including T-cell receptor (TCR), CD28 and ITGAL; proposed to be implicated in T-cell proliferation and effector function. In dendritic cells involved in endosome-to-membrane recycling of major histocompatibility complex (MHC) class II probably involving retromer and subsequently allowing antigen sampling, loading and presentation during T-cell activation. Involved in negative regulation of autophagy independently from its role in endosomal sorting by inhibiting BECN1 ubiquitination to inactivate PIK3C3/Vps34 activity. This Bos taurus (Bovine) protein is WASH complex subunit 1.